A 252-amino-acid polypeptide reads, in one-letter code: Fluoroquinolones export permease protein MT2760 (252 aa).

The next 6 helical transmembrane spans lie at 31–51, 69–89, 119–139, 148–168, 176–196, and 224–244; these read VMLV…TPLF, LILT…LAAF, ATVM…SGIL, IPIG…ILAV, LAMV…PWFI, and TWWP…WVLF.

The complex is composed of 2 ATP-binding proteins and 2 transmembrane proteins.

It localises to the cell membrane. Part of the ABC transporter complex involved in fluoroquinolones export. Probably responsible for the translocation of the substrate across the membrane. This Mycobacterium tuberculosis (strain CDC 1551 / Oshkosh) protein is Fluoroquinolones export permease protein MT2760.